Consider the following 281-residue polypeptide: MILSLLSMNINYNSITSIKQILKERKIAPRKLWGQNYLINESIRQKIIESLDIKENEKIWEIGPGLGAMTDILLKKTNLLTAFEIDLKYSEILNEKFGKLKNFKLIKGDFLKKYPNENKNIDKIFSNLPYNIASKVISKLIEENFLKEMVLTVQKELADRITAKTNSKNYSSFTVLVQSHFTAIKIIDIGENNFYPAPKVKSTTLKLIPKKNNIKDFKEFNKLIRTVFSGRRKKLKNTIINFIKNKAILEENFLKEYLGKRPENISVEEFIQISNNLNAYH.

S-adenosyl-L-methionine is bound by residues N36, L38, G63, E84, D109, and N127.

The protein belongs to the class I-like SAM-binding methyltransferase superfamily. rRNA adenine N(6)-methyltransferase family. RsmA subfamily.

The protein localises to the cytoplasm. The enzyme catalyses adenosine(1518)/adenosine(1519) in 16S rRNA + 4 S-adenosyl-L-methionine = N(6)-dimethyladenosine(1518)/N(6)-dimethyladenosine(1519) in 16S rRNA + 4 S-adenosyl-L-homocysteine + 4 H(+). Specifically dimethylates two adjacent adenosines (A1518 and A1519) in the loop of a conserved hairpin near the 3'-end of 16S rRNA in the 30S particle. May play a critical role in biogenesis of 30S subunits. In Borrelia garinii subsp. bavariensis (strain ATCC BAA-2496 / DSM 23469 / PBi) (Borreliella bavariensis), this protein is Ribosomal RNA small subunit methyltransferase A.